Consider the following 276-residue polypeptide: NH(3)-dependent NAD(+) synthetase (276 aa).

43-50 (GISGGVDS) contacts ATP. Residue D49 participates in Mg(2+) binding. R146 is a binding site for deamido-NAD(+). T166 lines the ATP pocket. E171 serves as a coordination point for Mg(2+). Positions 179 and 186 each coordinate deamido-NAD(+). Positions 195 and 217 each coordinate ATP. 266 to 267 (HK) provides a ligand contact to deamido-NAD(+).

This sequence belongs to the NAD synthetase family. In terms of assembly, homodimer.

It carries out the reaction deamido-NAD(+) + NH4(+) + ATP = AMP + diphosphate + NAD(+) + H(+). It functions in the pathway cofactor biosynthesis; NAD(+) biosynthesis; NAD(+) from deamido-NAD(+) (ammonia route): step 1/1. Functionally, catalyzes the ATP-dependent amidation of deamido-NAD to form NAD. Uses ammonia as a nitrogen source. The chain is NH(3)-dependent NAD(+) synthetase from Shewanella oneidensis (strain ATCC 700550 / JCM 31522 / CIP 106686 / LMG 19005 / NCIMB 14063 / MR-1).